The following is a 221-amino-acid chain: UPF0502 protein PLES_16071 (221 aa).

This sequence belongs to the UPF0502 family.

The protein is UPF0502 protein PLES_16071 of Pseudomonas aeruginosa (strain LESB58).